Consider the following 777-residue polypeptide: Beta-hexosaminidase (777 aa).

Residues 1–18 form the signal peptide; that stretch reads MKRLTFGACICCLLSLMA. The N-palmitoyl cysteine moiety is linked to residue Cys19. Cys19 carries the S-diacylglycerol cysteine lipid modification. The region spanning 625–766 is the PA14 domain; sequence APKPGLTIRT…VMIRLKGEEK (142 aa).

Belongs to the glycosyl hydrolase 20 family.

Its subcellular location is the cell outer membrane. The catalysed reaction is Hydrolysis of terminal non-reducing N-acetyl-D-hexosamine residues in N-acetyl-beta-D-hexosaminides.. This is Beta-hexosaminidase (nahA) from Porphyromonas gingivalis (strain ATCC BAA-308 / W83).